We begin with the raw amino-acid sequence, 199 residues long: NADH-quinone oxidoreductase subunit C (199 aa).

This sequence belongs to the complex I 30 kDa subunit family. As to quaternary structure, NDH-1 is composed of 14 different subunits. Subunits NuoB, C, D, E, F, and G constitute the peripheral sector of the complex.

It localises to the cell inner membrane. It catalyses the reaction a quinone + NADH + 5 H(+)(in) = a quinol + NAD(+) + 4 H(+)(out). NDH-1 shuttles electrons from NADH, via FMN and iron-sulfur (Fe-S) centers, to quinones in the respiratory chain. The immediate electron acceptor for the enzyme in this species is believed to be ubiquinone. Couples the redox reaction to proton translocation (for every two electrons transferred, four hydrogen ions are translocated across the cytoplasmic membrane), and thus conserves the redox energy in a proton gradient. The sequence is that of NADH-quinone oxidoreductase subunit C from Polynucleobacter necessarius subsp. necessarius (strain STIR1).